A 932-amino-acid polypeptide reads, in one-letter code: Protein translocase subunit SecA, chloroplastic (932 aa).

Residue 95 to 102 (MRTGEGKT) participates in ATP binding. Residues 632 to 641 (HESRRVDNQL) show a composition bias toward basic and acidic residues. The tract at residues 632 to 653 (HESRRVDNQLRGRSGRQGDPGS) is disordered.

It belongs to the SecA family.

It is found in the plastid. The protein resides in the chloroplast stroma. The protein localises to the chloroplast thylakoid membrane. It catalyses the reaction ATP + H2O + chloroplast-proteinSide 1 = ADP + phosphate + chloroplast-proteinSide 2.. Its function is as follows. Has a central role in coupling the hydrolysis of ATP to the transfer of proteins across the thylakoid membrane. This is Protein translocase subunit SecA, chloroplastic from Ostreococcus lucimarinus (strain CCE9901).